We begin with the raw amino-acid sequence, 267 residues long: Undecaprenyl-diphosphatase (267 aa).

The next 8 helical transmembrane spans lie at 1–21 (MSYF…FLPI), 39–59 (QGLA…VIYF), 83–103 (AKLA…GLVM), 111–131 (LRSA…LWWV), 144–164 (AGWK…IPGT), 189–209 (FLMS…KLVT), 218–238 (FLLT…HLFL), and 246–266 (MTPF…YLLM).

This sequence belongs to the UppP family.

The protein resides in the cell inner membrane. The enzyme catalyses di-trans,octa-cis-undecaprenyl diphosphate + H2O = di-trans,octa-cis-undecaprenyl phosphate + phosphate + H(+). Functionally, catalyzes the dephosphorylation of undecaprenyl diphosphate (UPP). Confers resistance to bacitracin. The sequence is that of Undecaprenyl-diphosphatase from Vibrio vulnificus (strain CMCP6).